The sequence spans 92 residues: Large ribosomal subunit protein uL24c (92 aa).

This sequence belongs to the universal ribosomal protein uL24 family. As to quaternary structure, part of the 50S ribosomal subunit.

Its subcellular location is the plastid. The protein localises to the chloroplast. In terms of biological role, one of two assembly initiator proteins, it binds directly to the 5'-end of the 23S rRNA, where it nucleates assembly of the 50S subunit. The protein is Large ribosomal subunit protein uL24c (rpl24) of Gracilaria tenuistipitata var. liui (Red alga).